We begin with the raw amino-acid sequence, 161 residues long: MPSMDIVSEVDEVELRNAVENSVRELKSRFDFRGKEASIEYKDHVVTLSAEDDFQCQQLVDILRMQMSKRSVDPASMDVDEKALHSGKTFSLKVRFKEGIETLIAKKLVKMIKDSKLKVQSSIQGDSVRVTGKKRDDLQAVMALARESELGQPFQFNNFRD.

Belongs to the YajQ family.

In terms of biological role, nucleotide-binding protein. This Shewanella sediminis (strain HAW-EB3) protein is Nucleotide-binding protein Ssed_3443.